Reading from the N-terminus, the 523-residue chain is REST corepressor 2 (523 aa).

The interval M1–D43 is disordered. Basic and acidic residues predominate over residues H30–D43. Phosphoserine is present on residues S31, S35, S36, and S63. Positions S44–T129 constitute an ELM2 domain. K88 participates in a covalent cross-link: Glycyl lysine isopeptide (Lys-Gly) (interchain with G-Cter in SUMO2). The 52-residue stretch at P130–S181 folds into the SANT 1 domain. A disordered region spans residues V185–L265. The residue at position 202 (S202) is a Phosphoserine. Positions Y248–P260 are enriched in basic residues. Positions T283–G314 form a coiled coil. The SANT 2 domain maps to K327–N378. Residues E387–L523 are disordered. Over residues S432–T459 the composition is skewed to pro residues. Low complexity predominate over residues A460–P482. The residue at position 479 (R479) is an Asymmetric dimethylarginine.

The protein belongs to the CoREST family.

The protein resides in the nucleus. Functionally, may act as a component of a corepressor complex that represses transcription. The chain is REST corepressor 2 (Rcor2) from Rattus norvegicus (Rat).